A 304-amino-acid polypeptide reads, in one-letter code: Sulfate adenylyltransferase subunit 2 (304 aa).

Belongs to the PAPS reductase family. CysD subfamily. Heterodimer composed of CysD, the smaller subunit, and CysN.

The catalysed reaction is sulfate + ATP + H(+) = adenosine 5'-phosphosulfate + diphosphate. Its pathway is sulfur metabolism; hydrogen sulfide biosynthesis; sulfite from sulfate: step 1/3. In terms of biological role, with CysN forms the ATP sulfurylase (ATPS) that catalyzes the adenylation of sulfate producing adenosine 5'-phosphosulfate (APS) and diphosphate, the first enzymatic step in sulfur assimilation pathway. APS synthesis involves the formation of a high-energy phosphoric-sulfuric acid anhydride bond driven by GTP hydrolysis by CysN coupled to ATP hydrolysis by CysD. The polypeptide is Sulfate adenylyltransferase subunit 2 (Acinetobacter baylyi (strain ATCC 33305 / BD413 / ADP1)).